The chain runs to 491 residues: Blue-light-activated histidine kinase (491 aa).

The 74-residue stretch at 19-92 (EANPFTAAVE…EIIHSALEAE (74 aa)) folds into the PAS 1 domain. Cysteine 69 carries the S-4a-FMN cysteine modification. Residues 93 to 147 (QSVEIDILNYKKSGEPFWNRLHISPVKTENGELHHFVSSQLDVTLELGKLVELEK) form the PAC domain. Residues 159–230 (SSDQLQYIVE…QRSQESFATG (72 aa)) form the PAS 2 domain. An HWE histidine kinase domain region spans residues 286 to 368 (EISHRFKNSM…GHRIRTSGPE (83 aa)). Histidine 289 bears the Phosphohistidine; by autocatalysis mark.

In terms of processing, FMN binds covalently to cysteine after exposure to blue light and this bond is spontaneously broken in the dark.

It catalyses the reaction ATP + protein L-histidine = ADP + protein N-phospho-L-histidine.. Its function is as follows. Photosensitive kinase that is involved in increased bacterial virulence upon exposure to light. The protein is Blue-light-activated histidine kinase of Brucella anthropi (strain ATCC 49188 / DSM 6882 / CCUG 24695 / JCM 21032 / LMG 3331 / NBRC 15819 / NCTC 12168 / Alc 37) (Ochrobactrum anthropi).